We begin with the raw amino-acid sequence, 618 residues long: V-type proton ATPase catalytic subunit A (618 aa).

Residue 251–258 participates in ATP binding; the sequence is GAFGCGKT.

This sequence belongs to the ATPase alpha/beta chains family. In terms of assembly, V-ATPase is a heteromultimeric enzyme composed of a peripheral catalytic V1 complex (main components: subunits A, B, C, D, E, and F) attached to an integral membrane V0 proton pore complex (main component: the proteolipid protein).

The catalysed reaction is ATP + H2O + 4 H(+)(in) = ADP + phosphate + 5 H(+)(out). Catalytic subunit of the peripheral V1 complex of vacuolar ATPase. V-ATPase vacuolar ATPase is responsible for acidifying a variety of intracellular compartments in eukaryotic cells. The polypeptide is V-type proton ATPase catalytic subunit A (vatA) (Dictyostelium discoideum (Social amoeba)).